The following is a 481-amino-acid chain: Glutamyl-tRNA(Gln) amidotransferase subunit A (481 aa).

Active-site charge relay system residues include Lys74 and Ser149. Catalysis depends on Ser173, which acts as the Acyl-ester intermediate.

Belongs to the amidase family. GatA subfamily. In terms of assembly, heterotrimer of A, B and C subunits.

It carries out the reaction L-glutamyl-tRNA(Gln) + L-glutamine + ATP + H2O = L-glutaminyl-tRNA(Gln) + L-glutamate + ADP + phosphate + H(+). Functionally, allows the formation of correctly charged Gln-tRNA(Gln) through the transamidation of misacylated Glu-tRNA(Gln) in organisms which lack glutaminyl-tRNA synthetase. The reaction takes place in the presence of glutamine and ATP through an activated gamma-phospho-Glu-tRNA(Gln). The polypeptide is Glutamyl-tRNA(Gln) amidotransferase subunit A (Francisella tularensis subsp. tularensis (strain WY96-3418)).